Here is a 294-residue protein sequence, read N- to C-terminus: N-acetylmuramic acid 6-phosphate etherase (294 aa).

The 164-residue stretch at Thr56–Lys219 folds into the SIS domain. Glu84 acts as the Proton donor in catalysis. The active site involves Glu115.

The protein belongs to the GCKR-like family. MurNAc-6-P etherase subfamily. Homodimer.

It carries out the reaction N-acetyl-D-muramate 6-phosphate + H2O = N-acetyl-D-glucosamine 6-phosphate + (R)-lactate. It participates in amino-sugar metabolism; 1,6-anhydro-N-acetylmuramate degradation. The protein operates within amino-sugar metabolism; N-acetylmuramate degradation. Its pathway is cell wall biogenesis; peptidoglycan recycling. Specifically catalyzes the cleavage of the D-lactyl ether substituent of MurNAc 6-phosphate, producing GlcNAc 6-phosphate and D-lactate. Together with AnmK, is also required for the utilization of anhydro-N-acetylmuramic acid (anhMurNAc) either imported from the medium or derived from its own cell wall murein, and thus plays a role in cell wall recycling. The protein is N-acetylmuramic acid 6-phosphate etherase of Francisella philomiragia subsp. philomiragia (strain ATCC 25017 / CCUG 19701 / FSC 153 / O#319-036).